The following is a 324-amino-acid chain: Acetyl-coenzyme A carboxylase carboxyl transferase subunit alpha (324 aa).

The CoA carboxyltransferase C-terminal domain occupies 42 to 296; that stretch reads RLSELEEEVY…EKALTRLAEK (255 aa).

This sequence belongs to the AccA family. In terms of assembly, acetyl-CoA carboxylase is a heterohexamer composed of biotin carboxyl carrier protein (AccB), biotin carboxylase (AccC) and two subunits each of ACCase subunit alpha (AccA) and ACCase subunit beta (AccD).

Its subcellular location is the cytoplasm. The enzyme catalyses N(6)-carboxybiotinyl-L-lysyl-[protein] + acetyl-CoA = N(6)-biotinyl-L-lysyl-[protein] + malonyl-CoA. It functions in the pathway lipid metabolism; malonyl-CoA biosynthesis; malonyl-CoA from acetyl-CoA: step 1/1. In terms of biological role, component of the acetyl coenzyme A carboxylase (ACC) complex. First, biotin carboxylase catalyzes the carboxylation of biotin on its carrier protein (BCCP) and then the CO(2) group is transferred by the carboxyltransferase to acetyl-CoA to form malonyl-CoA. The chain is Acetyl-coenzyme A carboxylase carboxyl transferase subunit alpha from Shouchella clausii (strain KSM-K16) (Alkalihalobacillus clausii).